Here is a 191-residue protein sequence, read N- to C-terminus: Molybdenum cofactor guanylyltransferase (191 aa).

GTP is bound by residues 11–13 (LCG), Lys23, Asp66, and Asp97. Asp97 serves as a coordination point for Mg(2+).

It belongs to the MobA family. As to quaternary structure, monomer. The cofactor is Mg(2+).

It localises to the cytoplasm. The enzyme catalyses Mo-molybdopterin + GTP + H(+) = Mo-molybdopterin guanine dinucleotide + diphosphate. Its function is as follows. Transfers a GMP moiety from GTP to Mo-molybdopterin (Mo-MPT) cofactor (Moco or molybdenum cofactor) to form Mo-molybdopterin guanine dinucleotide (Mo-MGD) cofactor. This is Molybdenum cofactor guanylyltransferase from Campylobacter jejuni subsp. jejuni serotype O:2 (strain ATCC 700819 / NCTC 11168).